The sequence spans 300 residues: CDP-diacylglycerol--serine O-phosphatidyltransferase (300 aa).

The next 6 helical transmembrane spans lie at 10 to 30 (AVNLQILPSSMTVLSICAGLT), 74 to 94 (IDSLADAVNFGVAPAVVLYAT), 95 to 115 (MLSTTPVGWVAVLLYPVCVVL), 135 to 155 (EFFVGMPAPAGAVSVIGLLAL), 162 to 182 (GWWTSTWFLCIWVTGTSMLLI), and 207 to 227 (LAIFAAAVVLAPYLLIWVIIL).

The protein belongs to the CDP-alcohol phosphatidyltransferase class-I family.

It localises to the cell membrane. It catalyses the reaction a CDP-1,2-diacyl-sn-glycerol + L-serine = a 1,2-diacyl-sn-glycero-3-phospho-L-serine + CMP + H(+). The chain is CDP-diacylglycerol--serine O-phosphatidyltransferase (pssA) from Mycobacterium leprae (strain TN).